We begin with the raw amino-acid sequence, 336 residues long: MKDRYILAFETSCDETSVAVLKNETELLSNVIASQIESHKRFGGVVPEVASRHHVEVITVCIEEALAEAGISEEQVTAVAVTYGPGLVGALLVGLAAAKSFAWAHDIPLIPVNHMAGHLMAAQSVEPLEFPLLALLVSGGHTELVYVSQAGDYKIVGETRDDAVGEAYDKVGRVMGLTYPAGREIDQLAHQGRDMYDFPRAMIKEDNLEFSFSGLKSAFINLHHNAQQKGEALSNQDLSASFQAAVMDILMAKTKKALEKYPVKTLVVAGGVAANQGLRERLAAEIQDVKVIIPPLRLCGDNAGMIAYASVSEWNKKNFAGLDLNAKPSLAFETME.

Fe cation contacts are provided by histidine 114 and histidine 118. Residues 136-140 (LVSGG), aspartate 169, glycine 182, aspartate 186, and asparagine 275 each bind substrate. Aspartate 301 provides a ligand contact to Fe cation.

This sequence belongs to the KAE1 / TsaD family. Fe(2+) is required as a cofactor.

It is found in the cytoplasm. It carries out the reaction L-threonylcarbamoyladenylate + adenosine(37) in tRNA = N(6)-L-threonylcarbamoyladenosine(37) in tRNA + AMP + H(+). Functionally, required for the formation of a threonylcarbamoyl group on adenosine at position 37 (t(6)A37) in tRNAs that read codons beginning with adenine. Is involved in the transfer of the threonylcarbamoyl moiety of threonylcarbamoyl-AMP (TC-AMP) to the N6 group of A37, together with TsaE and TsaB. TsaD likely plays a direct catalytic role in this reaction. The polypeptide is tRNA N6-adenosine threonylcarbamoyltransferase (Streptococcus gordonii (strain Challis / ATCC 35105 / BCRC 15272 / CH1 / DL1 / V288)).